Consider the following 392-residue polypeptide: MSIVCTFFLFLLNTSFAFAFAIPKPPIVRRLSTTVTSNSTASSCSANGNPIDECWRCDENWKDNRKNLADCAVGFGRDSIGGRAGEFYTVTDSGDDNPLNPTPGTLRYAATQDQPLWIIFDRDMVIQLKQDLQVASYKTIDGRGNNVQIAYGPCLTLYKVSNIIINNLYIHDCVPVKRNALSSLGGYSDGDGISIFESRDIWIDHCTLEKCYDGLIDAVNGSTDITISNSYMLNHNEVMLLGHSDEYSGDRDMRVTIAFNYFGEGLVQRMPRCRHGYFHIVNNIYRDWKMYAIGGSANPTIFSQGNVFIASNNQFTKEVTKRESADGDEEWKEWNWKSEGDEMVNGAFFTPSGKEDSPSYAKFSSMVARPASLLKTTHPSVGVLSCEIDQAC.

Positions 1 to 21 (MSIVCTFFLFLLNTSFAFAFA) are cleaved as a signal peptide. N38 carries an N-linked (GlcNAc...) asparagine glycan. Ca(2+) is bound by residues D189, D213, and D217. N220 carries an N-linked (GlcNAc...) asparagine glycan. Residue R269 is part of the active site.

Belongs to the polysaccharide lyase 1 family. Ca(2+) serves as cofactor.

It carries out the reaction Eliminative cleavage of (1-&gt;4)-alpha-D-galacturonan to give oligosaccharides with 4-deoxy-alpha-D-galact-4-enuronosyl groups at their non-reducing ends.. Its pathway is glycan metabolism; pectin degradation; 2-dehydro-3-deoxy-D-gluconate from pectin: step 2/5. This chain is Putative pectate lyase 21, found in Arabidopsis thaliana (Mouse-ear cress).